Here is a 201-residue protein sequence, read N- to C-terminus: NADH-ubiquinone oxidoreductase 21.3 kDa subunit (201 aa).

Complex I is composed of about 40 different subunits.

The protein localises to the mitochondrion inner membrane. It catalyses the reaction a ubiquinone + NADH + 5 H(+)(in) = a ubiquinol + NAD(+) + 4 H(+)(out). Its function is as follows. Transfer of electrons from NADH to the respiratory chain. The immediate electron acceptor for the enzyme is believed to be ubiquinone. The polypeptide is NADH-ubiquinone oxidoreductase 21.3 kDa subunit (Neurospora crassa (strain ATCC 24698 / 74-OR23-1A / CBS 708.71 / DSM 1257 / FGSC 987)).